A 377-amino-acid chain; its full sequence is Anhydro-N-acetylmuramic acid kinase (377 aa).

14–21 contacts ATP; that stretch reads GTSLDGVD.

The protein belongs to the anhydro-N-acetylmuramic acid kinase family.

The catalysed reaction is 1,6-anhydro-N-acetyl-beta-muramate + ATP + H2O = N-acetyl-D-muramate 6-phosphate + ADP + H(+). The protein operates within amino-sugar metabolism; 1,6-anhydro-N-acetylmuramate degradation. It participates in cell wall biogenesis; peptidoglycan recycling. Functionally, catalyzes the specific phosphorylation of 1,6-anhydro-N-acetylmuramic acid (anhMurNAc) with the simultaneous cleavage of the 1,6-anhydro ring, generating MurNAc-6-P. Is required for the utilization of anhMurNAc either imported from the medium or derived from its own cell wall murein, and thus plays a role in cell wall recycling. This is Anhydro-N-acetylmuramic acid kinase from Pasteurella multocida (strain Pm70).